The sequence spans 118 residues: Vitelline coat lysin (118 aa).

The protein is Vitelline coat lysin of Tegula pfeifferi (Pfeiffer's top shell).